A 124-amino-acid chain; its full sequence is Small ribosomal subunit protein eS8 (124 aa).

Residues 1 to 22 (MQYQGRSKRSKTGARLRPRSKK) are compositionally biased toward basic residues. Disordered stretches follow at residues 1–40 (MQYQ…GEPR) and 102–124 (AGTA…RVDE). Over residues 23 to 32 (SKSELGREPT) the composition is skewed to basic and acidic residues. Positions 106 to 124 (RVTSRPGQDGQVNATRVDE) are enriched in polar residues.

It belongs to the eukaryotic ribosomal protein eS8 family. As to quaternary structure, part of the 30S ribosomal subunit.

In Halobacterium salinarum (strain ATCC 29341 / DSM 671 / R1), this protein is Small ribosomal subunit protein eS8.